Reading from the N-terminus, the 185-residue chain is Elongation factor P (185 aa).

Belongs to the elongation factor P family.

Its subcellular location is the cytoplasm. Its pathway is protein biosynthesis; polypeptide chain elongation. Functionally, involved in peptide bond synthesis. Stimulates efficient translation and peptide-bond synthesis on native or reconstituted 70S ribosomes in vitro. Probably functions indirectly by altering the affinity of the ribosome for aminoacyl-tRNA, thus increasing their reactivity as acceptors for peptidyl transferase. This is Elongation factor P from Salinispora arenicola (strain CNS-205).